Consider the following 203-residue polypeptide: Transmembrane protein 269 (203 aa).

3 helical membrane-spanning segments follow: residues Gly60–Ile80, Phe124–Pro144, and Leu157–Tyr177.

It localises to the membrane. The sequence is that of Transmembrane protein 269 from Homo sapiens (Human).